The chain runs to 658 residues: Threonine--tRNA ligase (658 aa).

Residues 1–61 (MSDVRVTVQR…AAGDVVEPIT (61 aa)) form the TGS domain. The interval 259 to 554 (DHRRLGAELD…LLEHYAGALP (296 aa)) is catalytic. Zn(2+) contacts are provided by cysteine 353, histidine 404, and histidine 531.

This sequence belongs to the class-II aminoacyl-tRNA synthetase family. In terms of assembly, homodimer. The cofactor is Zn(2+).

Its subcellular location is the cytoplasm. It catalyses the reaction tRNA(Thr) + L-threonine + ATP = L-threonyl-tRNA(Thr) + AMP + diphosphate + H(+). Catalyzes the attachment of threonine to tRNA(Thr) in a two-step reaction: L-threonine is first activated by ATP to form Thr-AMP and then transferred to the acceptor end of tRNA(Thr). Also edits incorrectly charged L-seryl-tRNA(Thr). This is Threonine--tRNA ligase from Parafrankia sp. (strain EAN1pec).